A 355-amino-acid chain; its full sequence is Glucokinase (355 aa).

11-16 (GDIGGT) provides a ligand contact to ATP.

It belongs to the bacterial glucokinase family.

It is found in the cytoplasm. The enzyme catalyses D-glucose + ATP = D-glucose 6-phosphate + ADP + H(+). In Synechocystis sp. (strain ATCC 27184 / PCC 6803 / Kazusa), this protein is Glucokinase.